Consider the following 469-residue polypeptide: Adenosylhomocysteinase (469 aa).

Substrate contacts are provided by threonine 60, aspartate 135, and glutamate 195. Position 196-198 (196-198 (TTT)) interacts with NAD(+). Positions 225 and 229 each coordinate substrate. NAD(+) is bound by residues asparagine 230, 259 to 264 (GYGDVG), glutamate 282, asparagine 317, 338 to 340 (IGH), and asparagine 383.

It belongs to the adenosylhomocysteinase family. NAD(+) serves as cofactor.

Its subcellular location is the cytoplasm. The enzyme catalyses S-adenosyl-L-homocysteine + H2O = L-homocysteine + adenosine. Its pathway is amino-acid biosynthesis; L-homocysteine biosynthesis; L-homocysteine from S-adenosyl-L-homocysteine: step 1/1. Its function is as follows. May play a key role in the regulation of the intracellular concentration of adenosylhomocysteine. This is Adenosylhomocysteinase from Maricaulis maris (strain MCS10) (Caulobacter maris).